Here is a 392-residue protein sequence, read N- to C-terminus: Protein SRL2 (392 aa).

Ser-11 is modified (phosphoserine). The segment at 18-52 (KPSETPKMEEEKLEVTNVNASSSKKVHKSKKSTSK) is disordered. Residues 21–31 (ETPKMEEEKLE) show a composition bias toward basic and acidic residues. The span at 41–50 (KKVHKSKKST) shows a compositional bias: basic residues. Ser-139 bears the Phosphoserine mark. Positions 284 to 303 (EDSTAVTNENGHISSEKNLK) are disordered. Polar residues predominate over residues 287 to 296 (TAVTNENGHI).

The protein localises to the cytoplasm. The protein resides in the nucleus. The protein is Protein SRL2 (SRL2) of Saccharomyces cerevisiae (strain ATCC 204508 / S288c) (Baker's yeast).